The sequence spans 917 residues: Nitrate reductase [NADH] 2 (917 aa).

The segment at M1–S72 is disordered. Over residues A37–V47 the composition is skewed to polar residues. Acidic residues predominate over residues D57 to N67. Residue C191 coordinates Mo-molybdopterin. The Cytochrome b5 heme-binding domain occupies A542–I617. The heme site is built by H577 and H600. In terms of domain architecture, FAD-binding FR-type spans R660–L772. FAD contacts are provided by residues R712–T715, V729–Y733, F734, F741, L746–S748, and T799.

It belongs to the nitrate reductase family. Homodimer. FAD is required as a cofactor. Requires heme as cofactor. The cofactor is Mo-molybdopterin. As to expression, root, leaf, and shoot.

It carries out the reaction nitrite + NAD(+) + H2O = nitrate + NADH + H(+). Nitrate reductase is a key enzyme involved in the first step of nitrate assimilation in plants, fungi and bacteria. In Arabidopsis thaliana (Mouse-ear cress), this protein is Nitrate reductase [NADH] 2 (NIA2).